A 648-amino-acid chain; its full sequence is Replication restart protein PriA (648 aa).

The Helicase ATP-binding domain occupies 131–297 (TILNESNKPT…EIGKYQLVTL (167 aa)). Residue 144 to 151 (GVTGSGKT) participates in ATP binding. The short motif at 240 to 243 (DEEH) is the DEAH box element. C358, C361, C367, C370, C385, C388, C398, and C401 together coordinate Zn(2+). The Helicase C-terminal domain maps to 393–548 (KIFSSCPECL…SFFANELEIR (156 aa)).

Belongs to the helicase family. PriA subfamily. As to quaternary structure, component of the replication restart primosome. Zn(2+) is required as a cofactor.

It catalyses the reaction Couples ATP hydrolysis with the unwinding of duplex DNA by translocating in the 3'-5' direction.. The catalysed reaction is ATP + H2O = ADP + phosphate + H(+). Initiates the restart of stalled replication forks, which reloads the replicative helicase on sites other than the origin of replication. Recognizes and binds to abandoned replication forks and remodels them to uncover a helicase loading site. Promotes assembly of the primosome at these replication forks. This chain is Replication restart protein PriA, found in Rickettsia conorii (strain ATCC VR-613 / Malish 7).